A 538-amino-acid chain; its full sequence is (R)-citramalate synthase (538 aa).

A Pyruvate carboxyltransferase domain is found at 3–268 (IKVYDTTLRD…IPKENLKKLF (266 aa)).

The protein belongs to the alpha-IPM synthase/homocitrate synthase family.

The catalysed reaction is pyruvate + acetyl-CoA + H2O = (3R)-citramalate + CoA + H(+). It functions in the pathway amino-acid biosynthesis; L-isoleucine biosynthesis; 2-oxobutanoate from pyruvate: step 1/3. Its function is as follows. Catalyzes the condensation of pyruvate and acetyl-coenzyme A to form (R)-citramalate. The polypeptide is (R)-citramalate synthase (Thermotoga maritima (strain ATCC 43589 / DSM 3109 / JCM 10099 / NBRC 100826 / MSB8)).